The chain runs to 529 residues: Non-reducing end alpha-L-arabinofuranosidase BoGH43B (529 aa).

The N-terminal stretch at Met1–Ala23 is a signal peptide. Catalysis depends on Asp38, which acts as the Proton acceptor. Catalysis depends on Glu198, which acts as the Proton donor.

Belongs to the glycosyl hydrolase 43 family.

It localises to the periplasm. The enzyme catalyses Hydrolysis of terminal non-reducing alpha-L-arabinofuranoside residues in alpha-L-arabinosides.. The protein operates within glucan metabolism; xyloglucan degradation. In terms of biological role, alpha-L-arabinofuranosidase involved in xyloglucan degradation by mediating the cleavage of terminal non-reducing alpha-L-arabinofuranoside residues in xyloglucan branches, converting the 'S' units to 'X' units. The protein is Non-reducing end alpha-L-arabinofuranosidase BoGH43B of Bacteroides ovatus (strain ATCC 8483 / DSM 1896 / JCM 5824 / BCRC 10623 / CCUG 4943 / NCTC 11153).